Consider the following 835-residue polypeptide: BCL11 transcription factor A (835 aa).

Positions Met-1–Leu-12 are enriched in basic residues. A disordered region spans residues Met-1 to Gly-41. Positions Met-1–Arg-210 are required for nuclear body formation and for SUMO1 recruitment. A C2HC-type zinc finger spans residues Leu-45 to Cys-71. Zn(2+)-binding residues include Cys-48, Cys-51, His-66, and Cys-71. Position 86 is a phosphoserine (Ser-86). Lys-123 is covalently cross-linked (Glycyl lysine isopeptide (Lys-Gly) (interchain with G-Cter in SUMO2)). Position 162 is a phosphothreonine (Ile-162). A Glycyl lysine isopeptide (Lys-Gly) (interchain with G-Cter in SUMO2) cross-link involves residue Lys-164. The C2H2-type 1 zinc-finger motif lies at Tyr-170–His-193. Ser-205 carries the phosphoserine modification. Pro-214 bears the Phosphothreonine mark. Arg-271 is modified (asymmetric dimethylarginine). The tract at residues Ala-323–Ser-376 is disordered. Ser-332 and Ser-337 each carry phosphoserine. Residues Leu-355–Pro-372 show a composition bias toward pro residues. 2 consecutive C2H2-type zinc fingers follow at residues Lys-377–His-399 and Tyr-405–His-429. Residues Lys-421–Lys-430 show a composition bias toward basic residues. Disordered regions lie at residues Lys-421 to Ser-458, Lys-471 to Asp-512, and Arg-572 to Lys-619. Polar residues predominate over residues Gly-441–Pro-450. Phosphoserine is present on residues Ser-446 and Ser-447. Residues Asn-482 to Thr-506 show a composition bias toward acidic residues. The span at His-574–Thr-584 shows a compositional bias: basic and acidic residues. Phosphoserine is present on Ser-608. Lys-620 participates in a covalent cross-link: Glycyl lysine isopeptide (Lys-Gly) (interchain with G-Cter in SUMO2). Phosphoserine is present on residues Ser-625 and Ser-630. Lys-634 participates in a covalent cross-link: Glycyl lysine isopeptide (Lys-Gly) (interchain with G-Cter in SUMO1). Residues Ser-682–Ser-696 show a composition bias toward low complexity. Position 701 is a phosphothreonine (Thr-701). Residues Leu-706–Gly-720 are compositionally biased toward gly residues. Residues Glu-737–Glu-835 are DNA-binding. Residues Asp-742 to His-764 form a C2H2-type 4 zinc finger. Zn(2+) is bound by residues Cys-744, Cys-747, His-760, and His-764. Residues His-764–Glu-773 show a composition bias toward polar residues. The interval Thr-765–Pro-769 is disordered. Residues Tyr-770 to His-792 form a C2H2-type 5 zinc finger. Zn(2+)-binding residues include Cys-772, Cys-775, His-788, and His-792. The tract at residues Gly-793–Val-799 is disordered. The C2H2-type 6 zinc finger occupies Tyr-800–His-823. Zn(2+) contacts are provided by Cys-802, Cys-805, His-818, and His-823.

As to quaternary structure, homotetrameric; self-associates via C2HC-type zinc finger domain. Interacts with MTA2, a component of the nucleosome remodeling and deacetylase (NuRD) repressor complex. Interacts with NR2F1, PIAS3, NR2F2 and NR2F6. Interacts with TBR1. Sumoylated with SUMO1. Isoforms are expressed in a tissue-specific fashion. Isoforms 1, isoform 2, and isoform 3 are expressed at similar levels in testis, kidney and spleen. Isoform 1 is expressed in the stomach, and isoform 2 is expressed exclusively in the lung. Overexpression following proviral integration in hematopoietic cells results in the generation of myeloid leukemia.

The protein resides in the cytoplasm. It is found in the nucleus. Its function is as follows. Transcription factor. Associated with the BAF SWI/SNF chromatin remodeling complex. Binds to the 5'-TGACCA-3' sequence motif in regulatory regions of target genes. Involved in brain development. May play a role in hematopoiesis. Essential factor in lymphopoiesis, required for B-cell formation in fetal liver. May function as a modulator of the transcriptional repression activity of NR2F2. This Mus musculus (Mouse) protein is BCL11 transcription factor A (Bcl11a).